The sequence spans 218 residues: Thiopurine S-methyltransferase (218 aa).

Residues Trp-10, Leu-45, Glu-66, and Arg-123 each coordinate S-adenosyl-L-methionine.

The protein belongs to the class I-like SAM-binding methyltransferase superfamily. TPMT family.

The protein resides in the cytoplasm. It catalyses the reaction S-adenosyl-L-methionine + a thiopurine = S-adenosyl-L-homocysteine + a thiopurine S-methylether.. This is Thiopurine S-methyltransferase from Pseudomonas aeruginosa (strain UCBPP-PA14).